The sequence spans 288 residues: Aminoglycoside N(3)-acetyltransferase VII (288 aa).

It belongs to the antibiotic N-acetyltransferase family.

The enzyme catalyses a 2-deoxystreptamine antibiotic + acetyl-CoA = an N(3)-acetyl-2-deoxystreptamine antibiotic + CoA + H(+). Its function is as follows. Resistance to paromomycin. This chain is Aminoglycoside N(3)-acetyltransferase VII (aacC7), found in Streptomyces paromomycinus (Streptomyces rimosus subsp. paromomycinus).